Here is a 319-residue protein sequence, read N- to C-terminus: RWD domain-containing protein 2B (319 aa).

An RWD domain is found at 41–165 (AELDLLASMF…EWVREHASGY (125 aa)). Ser-275 is modified (phosphoserine).

As to expression, ubiquitous.

The protein is RWD domain-containing protein 2B (RWDD2B) of Homo sapiens (Human).